We begin with the raw amino-acid sequence, 747 residues long: Pentatricopeptide repeat-containing protein At5g39710 (747 aa).

15 PPR repeats span residues 133–167 (TSSV…GFMP), 168–203 (GVLS…QVSP), 204–238 (NVFT…GCLP), 239–273 (NVVT…GLEP), 274–308 (NLIS…GYSL), 309–343 (DEVT…GLTP), 344–378 (SVIT…GLCP), 379–413 (NERT…GFSP), 414–448 (SVVT…GLSP), 449–483 (DVVS…GIKP), 484–518 (DTIT…GLPP), 519–553 (DEFT…GVLP), 554–588 (DVVT…ESVP), 604–638 (EFKS…NHKP), and 639–673 (DGTA…GFLL).

Belongs to the PPR family. P subfamily.

The polypeptide is Pentatricopeptide repeat-containing protein At5g39710 (EMB2745) (Arabidopsis thaliana (Mouse-ear cress)).